Reading from the N-terminus, the 1092-residue chain is MEASAGLVAGSHNRNELVVIRRDGEPGPKPVKHTNGQVCQICGDDVGLTPDGEPFVACNECAFPVCRDCYEYERREGTQNCPQCKTRFKRLKGCARVPGDEEEEDVDDLENEFNWRDKTDSQYVAESMLHGHMSYGRGGDLDGVPQHFQPIPNVPLLTNGEMADDIPPEQHALVPSFMGGGGKRIHPLPYADPNLPVQPRSMDPSKDLAAYGYGSVAWKERMESWKQKQERLHQMRNDGGGKDWDGDGDDADLPLMDEARQPLSRKIPISSSLVNPYRMIIIIRLVVLGFFFHYRVMHPVPDAFALWLISVICEIWFAMSWILDQFPKWFPIERETYLDRLTLRFDKEGQQSQLAPVDFFVSTVDPMKEPPLVTANTVLSILAVDYPVDKVSCYVSDDGAAMLTFEALSETSEFAKKWVPFCKRYSLEPRAPEWYFQQKIDYLKDKVAPNFVRERRAMKREYEEFKVRINALVAKAQKVPEEGWTMQDGTPWPGNNVRDHPGMIQVFLGQSGGHDVEGNELPRLVYVSREKRPGYNHHKKAGAMNALVRVSAVLTNAPYMLNLDCDHYINNSKAIKEAMCFMMDPLVGKKVCYVQFPQRFDGIDRHDRYANRNVVFFDINMKGLDGIQGPIYVGTGCVFRRQALYGYDAPKSKKPPSRTCNCWPKWCICCCCFGNRTNKKKTAKPKTEKKKRLFFKRAENQSPAYALGEIDEGAPGAENEKAGIVNQQKLEKKFGQSSVFVASTLLENGGTLKSASPASLLKEAIHVISCGYEDKTDWGKEIGWIYGSVTEDILTGFKMHCHGWRSIYCIPKRAAFKGSAPLNLSDRLHQVLRWALGSIEIFFSNHCPLWYGYGGGLKCLERFSYINSIVYPWTSIPLLAYCTLPAICLLTGKFITPELTNIASLWFMSLFICIFATGILEMRWSGVGIDDWWRNEQFWVIGGVSSHLFAVFQGLLKVIAGIDTSFTVTSKGGDDEEFSELYTFKWTTLLIPPTTLLLLNFIGVVAGVSNAINNGYESWGPLFGKLFFAFWVIVHLYPFLKGLVGRQNRTPTIVIVWSILLASIFSLLWVRIDPFLAKNDGPLLEECGLDCN.

Residues 1–279 (MEASAGLVAG…SSSLVNPYRM (279 aa)) are Cytoplasmic-facing. The Zn(2+) site is built by Cys-39, Cys-42, Cys-58, Cys-61, Cys-66, Cys-69, Cys-81, and Cys-84. The segment at 39 to 85 (CQICGDDVGLTPDGEPFVACNECAFPVCRDCYEYERREGTQNCPQCK) adopts an RING-type; degenerate zinc-finger fold. A helical transmembrane segment spans residues 280–300 (IIIIRLVVLGFFFHYRVMHPV). Residues 301-302 (PD) lie on the Extracellular side of the membrane. The chain crosses the membrane as a helical span at residues 303-323 (AFALWLISVICEIWFAMSWIL). The Cytoplasmic portion of the chain corresponds to 324-868 (DQFPKWFPIE…CLERFSYINS (545 aa)). Residues Ser-362, Lys-368, Glu-369, and Asp-398 each coordinate UDP-alpha-D-glucose. The active site involves Asp-398. A coiled-coil region spans residues 450-479 (NFVRERRAMKREYEEFKVRINALVAKAQKV). Lys-539 contributes to the UDP-alpha-D-glucose binding site. Lys-540 and Asp-564 together coordinate Mn(2+). The active site involves Asp-792. A helical membrane pass occupies residues 869–889 (IVYPWTSIPLLAYCTLPAICL). Topologically, residues 890–901 (LTGKFITPELTN) are extracellular. Residues 902 to 922 (IASLWFMSLFICIFATGILEM) form a helical membrane-spanning segment. The Cytoplasmic portion of the chain corresponds to 923–938 (RWSGVGIDDWWRNEQF). A helical membrane pass occupies residues 939–959 (WVIGGVSSHLFAVFQGLLKVI). The Extracellular segment spans residues 960–987 (AGIDTSFTVTSKGGDDEEFSELYTFKWT). Residues 988–1008 (TLLIPPTTLLLLNFIGVVAGV) traverse the membrane as a helical segment. The Cytoplasmic segment spans residues 1009–1019 (SNAINNGYESW). A helical transmembrane segment spans residues 1020 to 1040 (GPLFGKLFFAFWVIVHLYPFL). Topologically, residues 1041–1049 (KGLVGRQNR) are extracellular. The helical transmembrane segment at 1050 to 1070 (TPTIVIVWSILLASIFSLLWV) threads the bilayer. The Cytoplasmic segment spans residues 1071 to 1092 (RIDPFLAKNDGPLLEECGLDCN).

This sequence belongs to the glycosyltransferase 2 family. Plant cellulose synthase subfamily. The cofactor is Mn(2+). Zn(2+) is required as a cofactor.

The protein localises to the cell membrane. The enzyme catalyses [(1-&gt;4)-beta-D-glucosyl](n) + UDP-alpha-D-glucose = [(1-&gt;4)-beta-D-glucosyl](n+1) + UDP + H(+). It functions in the pathway glycan metabolism; plant cellulose biosynthesis. Functionally, probable catalytic subunit of cellulose synthase terminal complexes ('rosettes'), required for beta-1,4-glucan microfibril crystallization, a major mechanism of the cell wall formation. The sequence is that of Probable cellulose synthase A catalytic subunit 5 [UDP-forming] (CESA5) from Oryza sativa subsp. indica (Rice).